We begin with the raw amino-acid sequence, 320 residues long: ATP-dependent 6-phosphofructokinase (320 aa).

G12 lines the ATP pocket. Residues R22–R26 and R55–D60 contribute to the ADP site. ATP contacts are provided by residues R73–F74 and G103–S106. A Mg(2+)-binding site is contributed by D104. Substrate is bound at residue T126–D128. D128 (proton acceptor) is an active-site residue. R155 contacts ADP. Substrate contacts are provided by residues R163 and M170–R172. ADP-binding positions include G186 to E188, K212, and K214 to H216. Substrate contacts are provided by residues E223, R244, and H250–R253.

It belongs to the phosphofructokinase type A (PFKA) family. ATP-dependent PFK group I subfamily. Prokaryotic clade 'B1' sub-subfamily. In terms of assembly, homotetramer. It depends on Mg(2+) as a cofactor.

The protein localises to the cytoplasm. The catalysed reaction is beta-D-fructose 6-phosphate + ATP = beta-D-fructose 1,6-bisphosphate + ADP + H(+). It functions in the pathway carbohydrate degradation; glycolysis; D-glyceraldehyde 3-phosphate and glycerone phosphate from D-glucose: step 3/4. Its activity is regulated as follows. Allosterically activated by ADP and other diphosphonucleosides, and allosterically inhibited by phosphoenolpyruvate. In terms of biological role, catalyzes the phosphorylation of D-fructose 6-phosphate to fructose 1,6-bisphosphate by ATP, the first committing step of glycolysis. This Salmonella gallinarum (strain 287/91 / NCTC 13346) protein is ATP-dependent 6-phosphofructokinase.